An 886-amino-acid polypeptide reads, in one-letter code: Leucine--tRNA ligase (886 aa).

The 'HIGH' region motif lies at 51–61; it reads PYPSGRIHMGH. The 'KMSKS' region signature appears at 644–648; it reads KMSKS. Lys647 contacts ATP.

This sequence belongs to the class-I aminoacyl-tRNA synthetase family.

The protein localises to the cytoplasm. The catalysed reaction is tRNA(Leu) + L-leucine + ATP = L-leucyl-tRNA(Leu) + AMP + diphosphate. In Bartonella tribocorum (strain CIP 105476 / IBS 506), this protein is Leucine--tRNA ligase.